The chain runs to 72 residues: Translation initiation factor IF-1 (72 aa).

One can recognise an S1-like domain in the interval 1–72 (MTKEENIEMQ…SKGRIIFRSR (72 aa)).

The protein belongs to the IF-1 family. Component of the 30S ribosomal translation pre-initiation complex which assembles on the 30S ribosome in the order IF-2 and IF-3, IF-1 and N-formylmethionyl-tRNA(fMet); mRNA recruitment can occur at any time during PIC assembly.

It localises to the cytoplasm. One of the essential components for the initiation of protein synthesis. Stabilizes the binding of IF-2 and IF-3 on the 30S subunit to which N-formylmethionyl-tRNA(fMet) subsequently binds. Helps modulate mRNA selection, yielding the 30S pre-initiation complex (PIC). Upon addition of the 50S ribosomal subunit IF-1, IF-2 and IF-3 are released leaving the mature 70S translation initiation complex. In Wigglesworthia glossinidia brevipalpis, this protein is Translation initiation factor IF-1.